Reading from the N-terminus, the 899-residue chain is Solute carrier family 12 member 9 (899 aa).

Over 1–42 (MANEHSPLLVHGVYSMMGNAEDSRGGSAGTGEASNPKTDPRK) the chain is Cytoplasmic. The chain crosses the membrane as a helical span at residues 43-63 (LNTFFGVMVPTILSMFSIVLF). Residues 64–78 (LRTGFVVGHAGLLHG) are Extracellular-facing. A helical membrane pass occupies residues 79–99 (LLMLFVAYFIISLTILSICAI). Residues 100-125 (STNGAVEGGGAYFMISRSLGPEFGGS) lie on the Cytoplasmic side of the membrane. Residues 126-146 (IGLMFYLAKVCACGVYVLGLV) traverse the membrane as a helical segment. Residues 147 to 175 (EAIMDVFGQDPGSSVAQGLRVLPQGYWYT) are Extracellular-facing. A helical membrane pass occupies residues 176 to 196 (VLYSSVVLLLCMLVCLVGAHI). The Cytoplasmic portion of the chain corresponds to 197 to 201 (YAKAS). The helical transmembrane segment at 202–222 (FLILLVVTVSLISIIISPLIV) threads the bilayer. At 223–269 (SPQGFNITHTYGNNHSVTVSPSYTGFNSTTLKNNLGPRYSLDYSTNT) the chain is on the extracellular side. 3 N-linked (GlcNAc...) asparagine glycosylation sites follow: Asn228, Asn236, and Asn249. The chain crosses the membrane as a helical span at residues 270-290 (MMSFATVFAVMFTSCTGIMAG). At 291–306 (ANMSGELKNPSESIPK) the chain is on the cytoplasmic side. Residues 307–327 (GTIMAVAYTFTVYVLLYLLLS) traverse the membrane as a helical segment. The Extracellular portion of the chain corresponds to 328–350 (STCDRSLLLNDYAVFQRVNVWPP). Residues 351 to 371 (FVTIGVYCASLSAAMCSMIGA) form a helical membrane-spanning segment. Residues 372 to 373 (SR) are Cytoplasmic-facing. A helical transmembrane segment spans residues 374–394 (ILHALALDQLFGLPLAPAAVT). The Extracellular portion of the chain corresponds to 395–399 (SSSGN). The chain crosses the membrane as a helical span at residues 400 to 420 (PWVSVLYTWALVQCTLFAGQL). A topological domain (cytoplasmic) is located at residue Asn421. A helical membrane pass occupies residues 422-442 (VIAGIVTVFYLLAYAAVDLAC). At 443 to 455 (LALEWASAPNFRP) the chain is on the extracellular side. A helical transmembrane segment spans residues 456-476 (TFQFFSWHTCLLGIISCVVMM). The Extracellular portion of the chain corresponds to 477 to 487 (FVINPVYSSAS). The helical transmembrane segment at 488–510 (IVLLLLLLLFLHYRSPTSSWGYI) threads the bilayer. The Cytoplasmic segment spans residues 511-563 (SQALIFHQVRKYLLMLDSRKDHVKFWRPQVLLMVSNPRSSCQLICFVNQLKKG). The helical transmembrane segment at 564–584 (GLFVLGHVQIGDLDVLPADPV) threads the bilayer. The Extracellular portion of the chain corresponds to 585 to 749 (QPQYNFWLSL…NLLTPGSASY (165 aa)). A helical membrane pass occupies residues 750–770 (ADVGSLFLLQMACVLNMASGW). Residues 771-899 (RRARLRIFVC…GVTPVTCTEL (129 aa)) are Cytoplasmic-facing.

Belongs to the SLC12A transporter family.

It is found in the cell membrane. The protein localises to the lysosome membrane. In terms of biological role, seems to correspond to a subunit of a multimeric transport system and thus, additional subunits may be required for its function. May play a role in lysosomal ion flux and osmoregulation. This chain is Solute carrier family 12 member 9 (slc12a9), found in Danio rerio (Zebrafish).